Here is a 347-residue protein sequence, read N- to C-terminus: Lipopolysaccharide core heptosyltransferase OpsX (347 aa).

This sequence belongs to the glycosyltransferase 9 family.

The protein operates within bacterial outer membrane biogenesis; LPS core biosynthesis. Functionally, catalyzes heptose transfer to the lipopolysaccharide core. It transfers the first L-glycero-D-manno-heptose to the phosphorylated 3-deoxy-alpha-D-manno-octulosonic acid (Kdo-P) of the inner core. The protein is Lipopolysaccharide core heptosyltransferase OpsX of Haemophilus influenzae (strain ATCC 51907 / DSM 11121 / KW20 / Rd).